Reading from the N-terminus, the 284-residue chain is Bifunctional protein FolD (284 aa).

NADP(+)-binding positions include Gly165–Ser167 and Ser190.

Belongs to the tetrahydrofolate dehydrogenase/cyclohydrolase family. Homodimer.

The enzyme catalyses (6R)-5,10-methylene-5,6,7,8-tetrahydrofolate + NADP(+) = (6R)-5,10-methenyltetrahydrofolate + NADPH. It carries out the reaction (6R)-5,10-methenyltetrahydrofolate + H2O = (6R)-10-formyltetrahydrofolate + H(+). It participates in one-carbon metabolism; tetrahydrofolate interconversion. Functionally, catalyzes the oxidation of 5,10-methylenetetrahydrofolate to 5,10-methenyltetrahydrofolate and then the hydrolysis of 5,10-methenyltetrahydrofolate to 10-formyltetrahydrofolate. This chain is Bifunctional protein FolD, found in Streptococcus uberis (strain ATCC BAA-854 / 0140J).